A 200-amino-acid polypeptide reads, in one-letter code: DNA-directed RNA polymerase subunit 7-like protein (200 aa).

The protein belongs to the eukaryotic RPB7/RPC8 RNA polymerase subunit family.

It localises to the nucleus. This is DNA-directed RNA polymerase subunit 7-like protein (NRPB7L) from Arabidopsis thaliana (Mouse-ear cress).